The chain runs to 138 residues: Holo-[acyl-carrier-protein] synthase (138 aa).

Mg(2+)-binding residues include Asp-8 and Glu-56.

This sequence belongs to the P-Pant transferase superfamily. AcpS family. Mg(2+) serves as cofactor.

It localises to the cytoplasm. The enzyme catalyses apo-[ACP] + CoA = holo-[ACP] + adenosine 3',5'-bisphosphate + H(+). Its function is as follows. Transfers the 4'-phosphopantetheine moiety from coenzyme A to a Ser of acyl-carrier-protein. The polypeptide is Holo-[acyl-carrier-protein] synthase (Clostridium novyi (strain NT)).